Here is a 221-residue protein sequence, read N- to C-terminus: ATP phosphoribosyltransferase (221 aa).

The protein belongs to the ATP phosphoribosyltransferase family. Short subfamily. Heteromultimer composed of HisG and HisZ subunits.

The protein localises to the cytoplasm. It catalyses the reaction 1-(5-phospho-beta-D-ribosyl)-ATP + diphosphate = 5-phospho-alpha-D-ribose 1-diphosphate + ATP. It participates in amino-acid biosynthesis; L-histidine biosynthesis; L-histidine from 5-phospho-alpha-D-ribose 1-diphosphate: step 1/9. Its function is as follows. Catalyzes the condensation of ATP and 5-phosphoribose 1-diphosphate to form N'-(5'-phosphoribosyl)-ATP (PR-ATP). Has a crucial role in the pathway because the rate of histidine biosynthesis seems to be controlled primarily by regulation of HisG enzymatic activity. This Neisseria gonorrhoeae (strain ATCC 700825 / FA 1090) protein is ATP phosphoribosyltransferase.